Here is a 133-residue protein sequence, read N- to C-terminus: ATP synthase epsilon chain, chloroplastic (133 aa).

This sequence belongs to the ATPase epsilon chain family. In terms of assembly, F-type ATPases have 2 components, CF(1) - the catalytic core - and CF(0) - the membrane proton channel. CF(1) has five subunits: alpha(3), beta(3), gamma(1), delta(1), epsilon(1). CF(0) has three main subunits: a, b and c.

The protein localises to the plastid. The protein resides in the chloroplast thylakoid membrane. Functionally, produces ATP from ADP in the presence of a proton gradient across the membrane. This chain is ATP synthase epsilon chain, chloroplastic, found in Zygnema circumcarinatum (Green alga).